Consider the following 536-residue polypeptide: Caspase recruitment domain-containing protein 9 (536 aa).

Position 2 is a phosphoserine (Ser-2). 3 residues coordinate Zn(2+): Asp-3, Cys-10, and His-73. The CARD domain occupies Asn-6–Glu-98. The interval Pro-99–Thr-116 is linker. Residues Gln-117–Lys-272 adopt a coiled-coil conformation. Residue Lys-125 forms a Glycyl lysine isopeptide (Lys-Gly) (interchain with G-Cter in ubiquitin) linkage. Residue Thr-231 is modified to Phosphothreonine; by PKC/PRKCD. Ser-277 is subject to Phosphoserine. Residues Ser-303–Gln-415 adopt a coiled-coil conformation. Phosphoserine is present on residues Ser-424, Ser-425, Ser-431, Ser-451, Ser-461, Ser-483, and Ser-498. The interval Ser-425 to Ser-451 is disordered. Residues Leu-476 to Ser-536 are disordered. Residues Pro-487 to Tyr-502 show a composition bias toward basic and acidic residues. Phosphothreonine; by CK2 is present on residues Thr-531 and Thr-533.

In terms of assembly, monomer. Homodimer; homodimerization is mediated by the CARD domain which forms an extensive interaction with the adjacent linker and coiled-coil regions; leads to an autoinhibited state. Homomultimer; polymerizes following activation, forming a nucleating helical template that seeds BCL10-filament formation via a CARD-CARD interaction. Interacts (via CARD domain) with BCL10 (via CARD domain); interaction takes place following CARD9 activation and polymerization, leading to the formation of a filamentous CBM complex assembly. Component of a CBM complex (CARD9-BCL10, MALT1), composed of CARD9, BCL10 and MALT1. Interacts with RASGRF1. Interacts with NOD2 (via NACHT domain); interaction is direct. Interacts with RIPK2. Interacts with VHL; without leading to protein degradation. In terms of processing, phosphorylated at Thr-231 by PRKCD downstream of C-type lectin receptors activation: phosphorylation promotes interaction with BCL10, followed by activation of NF-kappa-B and MAP kinase p38 pathways. Phosphorylated at Thr-531 and Thr-531 by CK2 following interaction with VHL, leading to inhibit the ability to activate NF-kappa-B. Ubiquitinated at Lys-125 via 'Lys-27'-linked ubiquitin by TRIM62 downstream of C-type lectin receptors activation; leading to CARD9 activation, followed by activation of NF-kappa-B and MAP kinase p38 pathways. Deubiquitinated at Lys-125 by USP15, inhibiting CARD9. In terms of tissue distribution, specifically expressed in myeloid cells. Not expressed in non-lymphoid organs.

The protein localises to the cytoplasm. With respect to regulation, maintained in an autoinhibited state via homodimerization in which the CARD domain forms an extensive interaction with the adjacent linker and coiled-coil regions. Activation downstream of C-type lectin receptors, by phosphorylation by PRKCD and/or ubiquitination by TRIM62, triggers disruption of the CARD domain-coiled coil interface, CARD9 homooligomerization and BCL10 recruitment, followed by activation of NF-kappa-B and MAP kinase p38 pathways. Zinc-binding inhibits activation by stabilizing the CARD ground-state conformation and restricting its capacity to form BCL10-nucleating filaments. In terms of biological role, adapter protein that plays a key role in innate immune response against fungi by forming signaling complexes downstream of C-type lectin receptors. CARD9-mediated signals are essential for antifungal immunity against a subset of fungi from the phylum Ascomycota. Transduces signals in myeloid cells downstream of C-type lectin receptors CLEC7A (dectin-1), CLEC6A (dectin-2) and CLEC4E (Mincle), which detect pathogen-associated molecular pattern metabolites (PAMPs), such as fungal carbohydrates, and trigger CARD9 activation. Upon activation, CARD9 homooligomerizes to form a nucleating helical template that recruits BCL10 via CARD-CARD interaction, thereby promoting polymerization of BCL10 and subsequent recruitment of MALT1: this leads to activation of NF-kappa-B and MAP kinase p38 (MAPK11, MAPK12, MAPK13 and/or MAPK14) pathways which stimulate expression of genes encoding pro-inflammatory cytokines and chemokines. CARD9 signaling in antigen-presenting cells links innate sensing of fungi to the activation of adaptive immunity and provides a cytokine milieu that induces the development and subsequent of interleukin 17-producing T helper (Th17) cells. Also involved in activation of myeloid cells via classical ITAM-associated receptors and TLR: required for TLR-mediated activation of MAPK, while it is not required for TLR-induced activation of NF-kappa-B. CARD9 can also be engaged independently of BCL10: forms a complex with RASGRF1 downstream of C-type lectin receptors, which recruits and activates HRAS, leading to ERK activation and the production of cytokines. Acts as an important regulator of the intestinal commensal fungi (mycobiota) component of the gut microbiota. Plays an essential role in antifungal immunity against dissemination of gut fungi: acts by promoting induction of antifungal IgG antibodies response in CX3CR1(+) macrophages to confer protection against disseminated C.albicans or C.auris infection. Also mediates immunity against other pathogens, such as certain bacteria, viruses and parasites; CARD9 signaling is however redundant with other innate immune responses. In response to L.monocytogenes infection, required for the production of inflammatory cytokines activated by intracellular peptidoglycan: acts by connecting NOD2 recognition of peptidoglycan to downstream activation of MAP kinases (MAPK) without activating NF-kappa-B. The sequence is that of Caspase recruitment domain-containing protein 9 from Mus musculus (Mouse).